The chain runs to 298 residues: Ribosomal protein L11 methyltransferase (298 aa).

S-adenosyl-L-methionine contacts are provided by Thr152, Gly176, Asp198, and Asn236.

The protein belongs to the methyltransferase superfamily. PrmA family.

The protein resides in the cytoplasm. It carries out the reaction L-lysyl-[protein] + 3 S-adenosyl-L-methionine = N(6),N(6),N(6)-trimethyl-L-lysyl-[protein] + 3 S-adenosyl-L-homocysteine + 3 H(+). In terms of biological role, methylates ribosomal protein L11. The sequence is that of Ribosomal protein L11 methyltransferase from Polaromonas sp. (strain JS666 / ATCC BAA-500).